Here is a 288-residue protein sequence, read N- to C-terminus: ATP synthase gamma chain (288 aa).

It belongs to the ATPase gamma chain family. F-type ATPases have 2 components, CF(1) - the catalytic core - and CF(0) - the membrane proton channel. CF(1) has five subunits: alpha(3), beta(3), gamma(1), delta(1), epsilon(1). CF(0) has three main subunits: a, b and c.

The protein resides in the cell inner membrane. In terms of biological role, produces ATP from ADP in the presence of a proton gradient across the membrane. The gamma chain is believed to be important in regulating ATPase activity and the flow of protons through the CF(0) complex. The chain is ATP synthase gamma chain from Polaromonas naphthalenivorans (strain CJ2).